The primary structure comprises 478 residues: Protein MAINTENANCE OF MERISTEMS (478 aa).

The interval 459 to 478 (ASTTNKRKRREEQQQTDWSE) is disordered. A Nuclear localization signal motif is present at residues 464–468 (KRKRR).

As to expression, expressed in root meristem, root vasculature, shoot apical meristem (SAM), leaf vasculature and ovules.

The protein resides in the nucleus. Required for the organization of the root apical meristem (RAM) and the shoot apical meristem (SAM). Required to maintain genome stability and cell division activity in meristematic cells. In Arabidopsis thaliana (Mouse-ear cress), this protein is Protein MAINTENANCE OF MERISTEMS.